The sequence spans 342 residues: Peptide chain release factor 1 (342 aa).

Glutamine 211 is subject to N5-methylglutamine. Positions 262-282 are disordered; the sequence is KEREISQKRKSQIGTGERSEK.

It belongs to the prokaryotic/mitochondrial release factor family. Post-translationally, methylated by PrmC. Methylation increases the termination efficiency of RF1.

The protein resides in the cytoplasm. Peptide chain release factor 1 directs the termination of translation in response to the peptide chain termination codons UAG and UAA. This Thermotoga maritima (strain ATCC 43589 / DSM 3109 / JCM 10099 / NBRC 100826 / MSB8) protein is Peptide chain release factor 1 (prfA).